The primary structure comprises 513 residues: Zinc finger protein RFP (513 aa).

Residues 16 to 57 form an RING-type zinc finger; it reads CPVCLQYFAEPMMLDCGHNICCACLARCWGTAETNVSCPQCR. Zn(2+)-binding residues include cysteine 96, histidine 99, cysteine 118, and histidine 124. The B box-type zinc-finger motif lies at 96–127; the sequence is CEKHREPLKLYCEEDQMPICVVCDRSREHRGH. Coiled-coil stretches lie at residues 132–172 and 282–311; these read LEEA…AELL and QKCL…LREA. The B30.2/SPRY domain occupies 298 to 492; that stretch reads MQSDMEKIQE…SAAPLIICPM (195 aa).

This sequence belongs to the TRIM/RBCC family. Homomultimerizes. Part of a complex consisting of TRIM27, USP7 and MAGEL2; directly interacts with USP7. Interacts with PML, EIF3S6, EPC1, CHD4 and EID1. Interacts with MAGED4, MAGEF1 and MAGEL2. Interacts with PTPN11. Interacts with autophagy receptor p62/SQSTM1. As to quaternary structure, (Microbial infection) Interacts with M.tuberculosis PtpA, whick blocks TRIM27-promoted JNK/p38 MAPK pathway activation and cell apoptosis. In terms of assembly, (Microbial infection) Interacts with herpes simplex virus protein ICP0. As to expression, expressed in testis namely within the seminiferous tubules.

It is found in the nucleus. The protein localises to the cytoplasm. Its subcellular location is the PML body. It localises to the early endosome. The protein resides in the mitochondrion. It catalyses the reaction S-ubiquitinyl-[E2 ubiquitin-conjugating enzyme]-L-cysteine + [acceptor protein]-L-lysine = [E2 ubiquitin-conjugating enzyme]-L-cysteine + N(6)-ubiquitinyl-[acceptor protein]-L-lysine.. The protein operates within protein modification; protein ubiquitination. In terms of biological role, E3 ubiquitin-protein ligase that mediates ubiquitination of various substrates and thereby plays a role in diffent processes including proliferation, innate immunity, apoptosis, immune response or autophagy. Ubiquitinates PIK3C2B and inhibits its activity by mediating the formation of 'Lys-48'-linked polyubiquitin chains; the function inhibits CD4 T-cell activation. Acts as a regulator of retrograde transport: together with MAGEL2, mediates the formation of 'Lys-63'-linked polyubiquitin chains at 'Lys-220' of WASHC1, leading to promote endosomal F-actin assembly. Has a transcriptional repressor activity by cooperating with EPC1. Induces apoptosis by activating Jun N-terminal kinase and p38 kinase and also increases caspase-3-like activity independently of mitochondrial events. May function in male germ cell development. Has DNA-binding activity and preferentially bound to double-stranded DNA. Forms a complex with and ubiquitinates the ubiquitin-specific protease USP7, which in turn deubiquitinates RIPK1 resulting in the positive regulation of TNF-alpha-induced apoptosis. In addition, acts with USP7 or PTPN11 as an inhibitor of the antiviral signaling pathway by promoting kinase TBK1 ubiquitination and degradation. Acts as a negative regulator of NOD2 signaling by mediating ubiquitination of NOD2, promoting its degradation by the proteasome. Alternatively, facilitates mitophagy via stabilization of active TBK1. Negatively regulates autophagy flux under basal conditions by directly polyubiquitinating ULK1. During starvation-induced autophagy, catalyzes non-degradative ubiquitination of the kinase STK38L promoting its activation and phosphorylation of ULK1 leading to its ubiquitination and degradation to restrain the amplitude and duration of autophagy. (Microbial infection) Positively regulates hepatitis C virus replication by suppressing type I IFN response during infection. The protein is Zinc finger protein RFP of Homo sapiens (Human).